A 541-amino-acid chain; its full sequence is MESRRSANYQASIWDDNFIQSLASPYAGEKYAEKAEKLKTEVKTMIDQTRDELKQLELIDNLQRLGICHHFQDLTKKILQKIYGEERNGDHQHYKEKGLHFTALRFRILRQDGYHVPQDVFSSFMNKAGDFEESLSKDTKGLVSLYEASYLSMEGETILDMAKDFSSHHLHKMVEDATDKRVANQIIHSLEMPLHRRVQKLEAIWFIQFYECGSDANPTLVELAKLDFNMVQATYQEELKRLSRWYEETGLQEKLSFARHRLAEAFLWSMGIIPEGHFGYGRMHLMKIGAYITLLDDIYDVYGTLEELQVLTEIIERWDINLLDQLPEYMQIFFLYMFNSTNELAYEILRDQGINVISNLKGLWVELSQCYFKEATWFHNGYTPTTEEYLNVACISASGPVILFSGYFTTTNPINKHELQSLERHAHSLSMILRLADDLGTSSDEMKRGDVPKAIQCFMNDTGCCEEEARQHVKRLIDAEWKKMNKDILMEKPFKNFCPTAMNLGRISMSFYEHGDGYGGPHSDTKKKMVSLFVQPMNITI.

Positions 296, 300, 437, 441, and 445 each coordinate Mg(2+). Positions 296–300 (DDIYD) match the DDXXD motif motif.

The protein belongs to the terpene synthase family. It depends on Mg(2+) as a cofactor. Mn(2+) serves as cofactor.

The enzyme catalyses (2E,6E)-farnesyl diphosphate = alpha-zingiberene + diphosphate. It participates in secondary metabolite biosynthesis; terpenoid biosynthesis. In terms of biological role, sesquiterpene synthase that catalyzes the formation of alpha-zingiberene and other sesquiterpenes from trans,trans-farnesyl diphosphate (FPP). May have an additional monoterpene synthase activity. In Ocimum basilicum (Sweet basil), this protein is Alpha-zingiberene synthase (ZIS).